A 214-amino-acid chain; its full sequence is Elongation factor Ts (214 aa).

The involved in Mg(2+) ion dislocation from EF-Tu stretch occupies residues 80-83 (TDFV).

This sequence belongs to the EF-Ts family.

The protein resides in the cytoplasm. Functionally, associates with the EF-Tu.GDP complex and induces the exchange of GDP to GTP. It remains bound to the aminoacyl-tRNA.EF-Tu.GTP complex up to the GTP hydrolysis stage on the ribosome. The sequence is that of Elongation factor Ts from Syntrophomonas wolfei subsp. wolfei (strain DSM 2245B / Goettingen).